Here is a 1652-residue protein sequence, read N- to C-terminus: Venom factor (1652 aa).

The signal sequence occupies residues 1-22 (MEGMALYLVAALLIGFPASSFG). Mg(2+) contacts are provided by Pro519, Asp542, Val543, and Asp545. Intrachain disulfides connect Cys547-Cys808, Cys616-Cys651, Cys684-Cys711, Cys685-Cys718, Cys698-Cys719, Cys864-Cys1502, Cys1347-Cys1478, Cys1378-Cys1447, Cys1495-Cys1500, Cys1507-Cys1579, Cys1526-Cys1650, and Cys1626-Cys1635. The propeptide occupies 657–740 (RRRRRSVVLL…REDELFLARS (84 aa)). The interval 661–739 (RSVVLLDSKA…KREDELFLAR (79 aa)) is C3a-like domain. The Anaphylatoxin-like domain maps to 684–719 (CCEDGMHENPMGYSCEKREKYIQEGDACKAAFLECC). A factor B binding site region spans residues 743–754 (EDEFFGEDNIIS). Positions 992 to 1270 (HLIITPSGCG…VVGFQGLAEY (279 aa)) are excised as a propeptide. Positions 992–1270 (HLIITPSGCG…VVGFQGLAEY (279 aa)) are C3d-like domain. A cross-link (isoglutamyl cysteine thioester (Cys-Gln)) is located at residues 1000-1003 (CGEQ). The segment at 1197–1260 (VLMAASTERN…GGTYGQTQAT (64 aa)) is factor H binding site. The NTR domain maps to 1507-1650 (CSLLNQQKKI…LSNTLTIFGC (144 aa)).

This sequence belongs to the venom complement C3 homolog family. Heterotrimer of alpha, beta and gamma chains; disulfide-linked. Is active with factor B in the presence of factor D. In terms of processing, first processed by the removal of 4 Arg residues by furin-type protease, forming two chains, alpha and gamma/beta precursor, linked by a disulfide bond. Probably, a cobrin-like protease cleaves the C3a-like domain and then the C3d-like domain, generating the mature venom factor (VF). In terms of tissue distribution, expressed by the venom gland.

The protein resides in the secreted. Complement-activating protein in venom. It is a structural and functional analog of complement component C3b, the activated form of C3. It binds factor B (CFB), which is subsequently cleaved by factor D (CFD) to form the bimolecular complex VF/Bb. VF/Bb is a C3/C5 convertase that cleaves both complement components C3 and C5. Structurally, it resembles the C3b degradation product C3c, which is not able to form a C3/C5 convertase. Unlike C3b/Bb, VF/Bb is a stable complex and completely resistant to the actions of complement regulatory factors H (CFH) and I (CFI). Therefore, VF continuously activates complement resulting in the depletion of complement activity. The sequence is that of Venom factor from Crotalus adamanteus (Eastern diamondback rattlesnake).